The sequence spans 274 residues: 3-methyl-2-oxobutanoate hydroxymethyltransferase (274 aa).

Positions 44 and 83 each coordinate Mg(2+). 3-methyl-2-oxobutanoate is bound by residues 44–45, aspartate 83, and lysine 113; that span reads DS. Glutamate 115 lines the Mg(2+) pocket. Glutamate 182 serves as the catalytic Proton acceptor.

The protein belongs to the PanB family. In terms of assembly, homodecamer; pentamer of dimers. It depends on Mg(2+) as a cofactor.

The protein localises to the cytoplasm. The catalysed reaction is 3-methyl-2-oxobutanoate + (6R)-5,10-methylene-5,6,7,8-tetrahydrofolate + H2O = 2-dehydropantoate + (6S)-5,6,7,8-tetrahydrofolate. The protein operates within cofactor biosynthesis; (R)-pantothenate biosynthesis; (R)-pantoate from 3-methyl-2-oxobutanoate: step 1/2. Functionally, catalyzes the reversible reaction in which hydroxymethyl group from 5,10-methylenetetrahydrofolate is transferred onto alpha-ketoisovalerate to form ketopantoate. The protein is 3-methyl-2-oxobutanoate hydroxymethyltransferase of Campylobacter jejuni subsp. jejuni serotype O:23/36 (strain 81-176).